The following is a 62-amino-acid chain: Large ribosomal subunit protein bL28 (62 aa).

The protein belongs to the bacterial ribosomal protein bL28 family.

This is Large ribosomal subunit protein bL28 from Acidothermus cellulolyticus (strain ATCC 43068 / DSM 8971 / 11B).